Consider the following 447-residue polypeptide: Rab GDP dissociation inhibitor alpha (447 aa).

Ser-427 bears the Phosphoserine mark.

This sequence belongs to the Rab GDI family. As to quaternary structure, interacts with RHOH. Interacts with the non-phosphorylated forms of RAB1A, RAB3A, RAB5A, RAB5B, RAB5C, RAB8A, RAB8B, RAB12, RAB35, and RAB43. Interacts with RAB10. As to expression, high expression in brain, lower in other tissues.

The protein localises to the cytoplasm. It is found in the golgi apparatus. It localises to the trans-Golgi network. Its function is as follows. Regulates the GDP/GTP exchange reaction of most Rab proteins by inhibiting the dissociation of GDP from them, and the subsequent binding of GTP to them. Promotes the dissociation of GDP-bound Rab proteins from the membrane and inhibits their activation. Promotes the dissociation of RAB1A, RAB3A, RAB5A and RAB10 from membranes. The protein is Rab GDP dissociation inhibitor alpha (Gdi1) of Mus musculus (Mouse).